Reading from the N-terminus, the 124-residue chain is Large ribosomal subunit protein bL12 (124 aa).

This sequence belongs to the bacterial ribosomal protein bL12 family. As to quaternary structure, homodimer. Part of the ribosomal stalk of the 50S ribosomal subunit. Forms a multimeric L10(L12)X complex, where L10 forms an elongated spine to which 2 to 4 L12 dimers bind in a sequential fashion. Binds GTP-bound translation factors.

Functionally, forms part of the ribosomal stalk which helps the ribosome interact with GTP-bound translation factors. Is thus essential for accurate translation. This is Large ribosomal subunit protein bL12 from Liberibacter africanus subsp. capensis.